We begin with the raw amino-acid sequence, 338 residues long: 1-aminocyclopropane-1-carboxylate deaminase (338 aa).

Lys-51 carries the post-translational modification N6-(pyridoxal phosphate)lysine. Residue Ser-78 is the Nucleophile of the active site.

This sequence belongs to the ACC deaminase/D-cysteine desulfhydrase family. As to quaternary structure, homotrimer. It depends on pyridoxal 5'-phosphate as a cofactor.

The catalysed reaction is 1-aminocyclopropane-1-carboxylate + H2O = 2-oxobutanoate + NH4(+). Catalyzes a cyclopropane ring-opening reaction, the irreversible conversion of 1-aminocyclopropane-1-carboxylate (ACC) to ammonia and alpha-ketobutyrate. Allows growth on ACC as a nitrogen source. This Burkholderia orbicola (strain MC0-3) protein is 1-aminocyclopropane-1-carboxylate deaminase.